We begin with the raw amino-acid sequence, 482 residues long: tRNA sulfurtransferase (482 aa).

A THUMP domain is found at 61–165; sequence LAIRDALTRI…DDRLLLIKGR (105 aa). Residues 183–184, lysine 265, glycine 287, and glutamine 296 each bind ATP; that span reads LI. A disulfide bridge links cysteine 344 with cysteine 456. A Rhodanese domain is found at 404 to 482; sequence FGPNDVILDI…GFANVKVYRP (79 aa). The active-site Cysteine persulfide intermediate is the cysteine 456.

This sequence belongs to the ThiI family.

Its subcellular location is the cytoplasm. The enzyme catalyses [ThiI sulfur-carrier protein]-S-sulfanyl-L-cysteine + a uridine in tRNA + 2 reduced [2Fe-2S]-[ferredoxin] + ATP + H(+) = [ThiI sulfur-carrier protein]-L-cysteine + a 4-thiouridine in tRNA + 2 oxidized [2Fe-2S]-[ferredoxin] + AMP + diphosphate. The catalysed reaction is [ThiS sulfur-carrier protein]-C-terminal Gly-Gly-AMP + S-sulfanyl-L-cysteinyl-[cysteine desulfurase] + AH2 = [ThiS sulfur-carrier protein]-C-terminal-Gly-aminoethanethioate + L-cysteinyl-[cysteine desulfurase] + A + AMP + 2 H(+). Its pathway is cofactor biosynthesis; thiamine diphosphate biosynthesis. In terms of biological role, catalyzes the ATP-dependent transfer of a sulfur to tRNA to produce 4-thiouridine in position 8 of tRNAs, which functions as a near-UV photosensor. Also catalyzes the transfer of sulfur to the sulfur carrier protein ThiS, forming ThiS-thiocarboxylate. This is a step in the synthesis of thiazole, in the thiamine biosynthesis pathway. The sulfur is donated as persulfide by IscS. The protein is tRNA sulfurtransferase of Salmonella heidelberg (strain SL476).